The following is a 566-amino-acid chain: Cyclin G (566 aa).

Residues 285 to 368 (MWYELPSDVL…VIANKLGVQM (84 aa)) enclose the Cyclin N-terminal domain.

Belongs to the cyclin family. Cyclin G subfamily. In terms of assembly, interacts with corto. Interacts with the cyclin-dependent kinases Cdk2 and Cdk4. Interacts with Brca2 and Rad9. Interacts with polycomb protein Asx. Interacts with protein phosphatase 2A subunit wdb.

It is found in the chromosome. Functionally, cyclin with roles in multiple processes including transcription, meiotic recombination repair, cell cycle regulation, and promotion of normal growth and metabolism. Binds to the promoter region of the homeobox gene Abd-B and is involved in maintaining Abd-B expression in the pupal epithelium. Involved in the transcriptional repression of the homeotic genes Scr and Ubx. Plays a role in meiotic recombination repair of DNA double-strand breaks which ensures efficient translation of grk and promotes grk activity in the oocyte, leading to oocyte dorso-ventral axis formation following secretion of grk from the oocyte and its binding to Egfr in the directly overlying follicle cells. Negatively regulates the binding of serine/threonine-protein kinase Akt1 to the protein phosphatase 2A subunit wdb, promoting normal growth and metabolism. Required for the formation of bilateral symmetry. Negatively regulates cell cycle progression by preventing G1 to S transition and retarding S-phase progression. The polypeptide is Cyclin G (Drosophila melanogaster (Fruit fly)).